Here is a 405-residue protein sequence, read N- to C-terminus: Diaminopimelate decarboxylase (405 aa).

N6-(pyridoxal phosphate)lysine is present on Lys46. Residues Gly225 and 259–262 each bind pyridoxal 5'-phosphate; that span reads EPGR. Substrate contacts are provided by Arg262, Arg298, and Tyr302. The active-site Proton donor is Cys329. Substrate-binding residues include Glu330 and Tyr358. A pyridoxal 5'-phosphate-binding site is contributed by Tyr358.

It belongs to the Orn/Lys/Arg decarboxylase class-II family. LysA subfamily. In terms of assembly, homodimer. Pyridoxal 5'-phosphate serves as cofactor.

The catalysed reaction is meso-2,6-diaminopimelate + H(+) = L-lysine + CO2. It functions in the pathway amino-acid biosynthesis; L-lysine biosynthesis via DAP pathway; L-lysine from DL-2,6-diaminopimelate: step 1/1. Its function is as follows. Specifically catalyzes the decarboxylation of meso-diaminopimelate (meso-DAP) to L-lysine. The chain is Diaminopimelate decarboxylase from Helicobacter pylori (strain J99 / ATCC 700824) (Campylobacter pylori J99).